Reading from the N-terminus, the 214-residue chain is Protein verrocchio (214 aa).

Probably homomultimerizes. Component of the MTV complex, composed of moi/modigliani, tea and ver/verrocchio. Interacts with moi/modigliani and tea (via C-terminus); the interactions are direct and require fully intact moi/modigliani and ver/verrocchio. The MTV complex is recruited to telomeres by the HipHop-HOAP complex, consisting of HipHop, cav/HOAP and Su(var)205/HP1 to form the terminin telomere-capping complex. Interacts with cav/HOAP; the interaction is direct. Interacts with Su(var)205/HP1; the interaction is indirect and probably requires cav/HOAP or moi/modigliani. Probably interacts with peo (via N-terminus and UBC domain).

It localises to the nucleus. Its subcellular location is the chromosome. The protein resides in the telomere. In terms of biological role, part of the MTV complex that associates with the HipHop-HOAP complex to form the terminin telomere-capping complex involved in telomere maintenance and prevention of telomere fusion. As part of the MTV complex binds single stranded DNA in a sequence-independent manner, protecting it from degradation. This chain is Protein verrocchio, found in Drosophila melanogaster (Fruit fly).